Consider the following 1442-residue polypeptide: MSNVSPNSMNLNGSTSSTASVNDSGGGGGGGNVTSPTLSSSSASSISNSNSSSSNNLKPSTQPLSSSSTLNTPTQFSLQHSSSSSSLNNTNIDIIEHITISYQDESSIWKYIEAELPNHLPLKNISWKTKTGHTKVVEKMPIEILQYNDERVKAHYDNQNLYKKPYLYLYLVHCDDPDTYKNVVRAKIKQWVTQMTERQQEWLIVYVSLGPKRFSELTSKLTRTVFDRIKNDFNVKRDRCCQLRFLDTNNTSSGNNKDKDNDNGGGSSGTGLSTSTKQQDDLWDDFLIKMKEGIISSAEQYLTTYEDEIRKMDAKRTTPGWSYQNFFFIKEGLALIYERAQLYEDALMQYFELEVLFGDPNNRSQFDQITDEVLQPNSIHCNGNILDTSFKNYRKLIYENKISLFDFKVYLFARQSKLLFLLQKPIEAATKSISFITSMSMIIKQYPNSFAPMFKESWIFSTSMELIKACQDSFDKIVNGAQQQQQQQQQQLQLQQQLQQQQQQQTINGSAQKVVKSISSTTPISKLFGAFGPFGSSSSNTPSSTSATTAANGKNTPMPSNSGIASLSAGGSTIIAGLSGSQSLNNLQSAQLSGALNTQHYIRTPSLNLTSDLSERLTEKQDRESLDFLVGDLLFSSAQRLEELAIIIGYLPVDDYNSEMFFQNVEEVIFKSVENKKIEVDSMTAFSYQPLQVSLQSSKQFTQLYFELLGQIEKLYIQSNRMRSISRLTFAIANLNFKLKEFQIAENLFKSISNLYSREHWSYIEYAVKTRLSYCQKQLGHLVDYVTTCVGLLAPGLLTNRFEKDHYLSEIIQISRKPELNIVQPMIPLFKCKVTFKETVYRYFETIKINVRIKSNLISPIRFNNGAVSFVKSGFGDKLVFQLNDFLVEPGVNNFQFTAVGTTKATFVKDSIWLKIDNLSFGYSLRNADTAIGGGGGGTNTTTTTLPGEIKVIDSESQITLESFANSPLLFYSIQYVGIKLHTHSDTIEAGVLTFTSPTGATIIPTSSVIIIQSDDKTCETSSRTINLINDKLPLSQIGYNQTLEFYLPLMAVNTDTCTHQIRIELQHQKQTKEKFSSSLVSSILFINPLTIDESVINVNNRLFLKTIIQCNSPNMIQFNSYSLEGCDSEYQSPEQQQLQQQLQQQQQLSLSSSSSSISSISSKSSQQPNLYYLVKDHNHSLAPNLNLYPGQLVSLIFEIKKYENESLSSSTSPSSATDSSNSNGNNNNNNNNNNHSKNDLKLKIKYTSKMPQQDLDRPLIRECKSLWRDQNEFSWPIKIELPTYLYQIDLSIQSRAYVGTIVLFEIEITNLKQQQQQQKESNNDNGNEKQQKQQQLQYHIVADSQIWMISGKSKHTFSFNSDTVGEKLKFSCGLIPISSGSLPIPKVTLVGINNSNISYPKTKNEKIFVYPSPQIYSCHQLQDNNNNNNNSINSQTSTNKT.

The span at 1–23 (MSNVSPNSMNLNGSTSSTASVND) shows a compositional bias: polar residues. Disordered stretches follow at residues 1 to 86 (MSNV…SSSS), 251 to 277 (TSSG…TSTK), 535 to 564 (GSSS…NSGI), 1208 to 1238 (LSSS…NHSK), 1316 to 1335 (QQQQ…QKQQ), and 1422 to 1442 (LQDN…TNKT). Over residues 39 to 86 (SSSSASSISNSNSSSSNNLKPSTQPLSSSSTLNTPTQFSLQHSSSSSS) the composition is skewed to low complexity. Residues 535–553 (GSSSSNTPSSTSATTAANG) show a composition bias toward low complexity. Residues 554 to 564 (KNTPMPSNSGI) are compositionally biased toward polar residues. The span at 1208-1236 (LSSSTSPSSATDSSNSNGNNNNNNNNNNH) shows a compositional bias: low complexity. Residues 1425 to 1442 (NNNNNNNSINSQTSTNKT) show a composition bias toward low complexity.

This sequence belongs to the TMEM1 family. Part of the multisubunit TRAPP (transport protein particle) complex.

It is found in the golgi apparatus. The protein localises to the cis-Golgi network. Its function is as follows. May play a role in vesicular transport from endoplasmic reticulum to Golgi. In Dictyostelium discoideum (Social amoeba), this protein is Trafficking protein particle complex subunit 10 (trapcc10-1).